A 318-amino-acid chain; its full sequence is Acetyl-coenzyme A carboxylase carboxyl transferase subunit alpha (318 aa).

One can recognise a CoA carboxyltransferase C-terminal domain in the interval 39–292 (LTDKSEKQLR…GDSIAAELPD (254 aa)).

It belongs to the AccA family. Acetyl-CoA carboxylase is a heterohexamer composed of biotin carboxyl carrier protein (AccB), biotin carboxylase (AccC) and two subunits each of ACCase subunit alpha (AccA) and ACCase subunit beta (AccD).

The protein localises to the cytoplasm. It catalyses the reaction N(6)-carboxybiotinyl-L-lysyl-[protein] + acetyl-CoA = N(6)-biotinyl-L-lysyl-[protein] + malonyl-CoA. Its pathway is lipid metabolism; malonyl-CoA biosynthesis; malonyl-CoA from acetyl-CoA: step 1/1. Its function is as follows. Component of the acetyl coenzyme A carboxylase (ACC) complex. First, biotin carboxylase catalyzes the carboxylation of biotin on its carrier protein (BCCP) and then the CO(2) group is transferred by the carboxyltransferase to acetyl-CoA to form malonyl-CoA. The protein is Acetyl-coenzyme A carboxylase carboxyl transferase subunit alpha of Gluconacetobacter diazotrophicus (strain ATCC 49037 / DSM 5601 / CCUG 37298 / CIP 103539 / LMG 7603 / PAl5).